A 311-amino-acid chain; its full sequence is Catechol 1,2-dioxygenase 1 (311 aa).

Residues Tyr164, Tyr200, His224, and His226 each contribute to the Fe cation site.

The protein belongs to the intradiol ring-cleavage dioxygenase family. As to quaternary structure, homodimer. Fe(3+) is required as a cofactor.

The enzyme catalyses catechol + O2 = cis,cis-muconate + 2 H(+). It functions in the pathway aromatic compound metabolism; beta-ketoadipate pathway; 5-oxo-4,5-dihydro-2-furylacetate from catechol: step 1/3. Functionally, can cleave 4-methyl-, 4-chloro-, and 3-methoxycatechol at lower rates than catechol, but has no activity with 4-nitrocatechol or protocatechuic acid. In Acinetobacter lwoffii, this protein is Catechol 1,2-dioxygenase 1 (catA1).